The following is a 1242-amino-acid chain: Myosin-16 (1242 aa).

The Myosin N-terminal SH3-like domain occupies 6–55; the sequence is MVDSHVWVEDPERAWIDGVVLNIKGEEAEIKTNDGRDVIANLSRLYPKDT. The 670-residue stretch at 60–729 folds into the Myosin motor domain; sequence EGVEDMTRLS…QMAELDAHRT (670 aa). Residues 154 to 161 and 207 to 215 contribute to the ATP site; these read GESGSGKT and NNNSSRFGK. 4 actin-binding regions span residues 493–527, 529–552, 587–610, and 610–632; these read LIEK…YHTF, DHKR…AGDV, FPPL…KLQL, and LQQL…KPNN. IQ domains are found at residues 732–761, 755–784, 780–809, 803–832, 828–857, and 851–880; these read LGES…ASVN, MRRA…EEAA, REEA…SALT, TKSS…TRAA, TTRA…VSLL, and LKRV…ADRK. 2 disordered regions span residues 869–893 and 908–1042; these read KQLG…ELSN and EQSD…ERKT. Over residues 876-893 the composition is skewed to basic and acidic residues; that stretch reads QADRKEETEKERKVELSN. 6 repeat units span residues 876–908, 909–940, 941–965, 966–997, 998–1029, and 1030–1061. A 6 X 33 AA repeats of Q-S-D-D-x-E-E-x(2)-H-x-R-K-x-K-x(2)-I-x(2)-E-D-G-x(3)-S-x-V-x-H-S-x region spans residues 876–1061; sequence QADRKEETEK…IQKSFVTCSE (186 aa). A compositionally biased stretch (basic and acidic residues) spans 948–966; it reads GHERKTKLSIESEDGHSDQ. Residues 1079-1142 are a coiled coil; sequence DTEIESLTAE…QLQDSLNRLL (64 aa). The interval 1175–1242 is disordered; the sequence is DLADSSENSE…DKEGGFEDYF (68 aa). Low complexity predominate over residues 1179 to 1191; sequence SSENSEASSSDSD. The span at 1199-1224 shows a compositional bias: polar residues; it reads PSSDNFSTFNPNQLQVIVQDLSTTEA. Basic and acidic residues predominate over residues 1225-1242; sequence KGTESYDSDKEGGFEDYF.

Belongs to the TRAFAC class myosin-kinesin ATPase superfamily. Myosin family. Plant myosin class XI subfamily. Homodimer. Expressed in flowers and leaves.

It is found in the cytoplasm. Myosin heavy chain that is required for the cell cycle-regulated transport of various organelles and proteins for their segregation. Functions by binding with its tail domain to receptor proteins on organelles and exerting force with its N-terminal motor domain against actin filaments, thereby transporting its cargo along polarized actin cables. The chain is Myosin-16 (XI-J) from Arabidopsis thaliana (Mouse-ear cress).